The primary structure comprises 185 residues: Lipopolysaccharide export system protein LptA (185 aa).

The first 27 residues, 1 to 27 (MKFKTNKLSLNLVLASSLLAASIPAFA), serve as a signal peptide directing secretion. A disordered region spans residues 166–185 (PSQLQDKNNKGQTPAQKKGN).

This sequence belongs to the LptA family. Component of the lipopolysaccharide transport and assembly complex.

The protein localises to the periplasm. Functionally, involved in the assembly of lipopolysaccharide (LPS). Required for the translocation of LPS from the inner membrane to the outer membrane. May form a bridge between the inner membrane and the outer membrane, via interactions with LptC and LptD, thereby facilitating LPS transfer across the periplasm. In Escherichia coli O157:H7, this protein is Lipopolysaccharide export system protein LptA.